The primary structure comprises 589 residues: Putative phospholipase B-like 2 (589 aa).

Positions 1–41 (MVAPMYGSPGGRLARAVTRALALALVLALLVGLFLSGLTGA) are cleaved as a signal peptide. N-linked (GlcNAc...) asparagine glycosylation is found at asparagine 88 and asparagine 110. Residues cysteine 142 and cysteine 152 are joined by a disulfide bond. Residues asparagine 174, asparagine 231, asparagine 436, and asparagine 465 are each glycosylated (N-linked (GlcNAc...) asparagine). An intrachain disulfide couples cysteine 492 to cysteine 495. Asparagine 515 carries N-linked (GlcNAc...) asparagine glycosylation.

Belongs to the phospholipase B-like family. Interacts with IGF2R. In terms of processing, glycosylated; contains mannose 6-phosphate sugars.

It is found in the lysosome lumen. Its function is as follows. Putative phospholipase. The polypeptide is Putative phospholipase B-like 2 (PLBD2) (Bos taurus (Bovine)).